The primary structure comprises 172 residues: Endoribonuclease YbeY (172 aa).

Zn(2+)-binding residues include histidine 124, histidine 128, and histidine 134.

The protein belongs to the endoribonuclease YbeY family. Zn(2+) is required as a cofactor.

The protein resides in the cytoplasm. Functionally, single strand-specific metallo-endoribonuclease involved in late-stage 70S ribosome quality control and in maturation of the 3' terminus of the 16S rRNA. This chain is Endoribonuclease YbeY, found in Rhodopseudomonas palustris (strain BisA53).